We begin with the raw amino-acid sequence, 456 residues long: MHNTLPTLILGAGPAAIQLAVDISATGDARLGLYNRPSTKGERLKQYLALTPTLYLQGTGKAQATQKESSVTIDCYIDQLAQAVGDWQRLILAVPADHYYAVLQQIPWAALPQLKSVILLSSSMGSGLMVQNLLNAAGKRDVEVISLSSYYADTKYIRAETQDISANTQDINAGTQDIGAIQPYRAYTKAFKQRIYLANQWGNAGSAEMSWLTAVLARHHIDTLPCSNLLAAERFSITNYVHPPLALADTTLQALFYPEQRSQYLYKTQPEGPVCPAVIADLAGLADDYKRLLNRLGVEEINLLRFLNDDNYPVPASMVSRRWIDEFPQLPPLEQQYALFVRYTALLVDPYSTPDEQGRFYDFSAVKVATVYQDANALWHLPRVPLEDVHKLRTLLLLAGALDVVMPTAQRLLQRFQQALKAFIDRVGEEHCHPSLLGDDCDRQAAIIEQQWRSQT.

Residues 12 to 15, 35 to 40, and threonine 154 each bind NADP(+); these read AGPA and NRPSTK. Histidine 242 functions as the Proton donor/acceptor in the catalytic mechanism.

Belongs to the staphylopine dehydrogenase family. As to quaternary structure, homodimer.

The enzyme catalyses yersinopine + NADP(+) + H2O = (2S)-2-amino-4-{[(1S)-1-carboxy-2-(1H-imidazol-4-yl)ethyl]amino}butanoate + pyruvate + NADPH + H(+). Catalyzes the NADPH-dependent reductive condensation of pyruvate to the intermediate formed by the adjacently encoded enzyme y2836, namely (2S)-2-amino-4-{[(1S)-1-carboxy-2-(1H-imidazol-4-yl)ethyl]amino}butanoate, leading to the production of yersinopine. This is the last step in the biosynthesis of the metallophore yersinopine, which is involved in metal acquisition and thus enables bacterial growth inside the host, where metal access is limited. Therefore, this enzyme probably contributes to Yersinia virulence. Cannot use alpha-ketoglutarate in place of pyruvate, and displays only poor efficiency with oxaloacetate and glyoxylate. This Yersinia pestis protein is Yersinopine synthase.